The primary structure comprises 594 residues: UvrABC system protein C (594 aa).

Residues 13–99 (NSSGVYQYFD…IKQLKPKYNI (87 aa)) form the GIY-YIG domain. The region spanning 205–240 (DRLIKELELKMERLSSNLRFEEALIYRDRIAKIQKI) is the UVR domain.

It belongs to the UvrC family. In terms of assembly, interacts with UvrB in an incision complex.

The protein resides in the cytoplasm. Functionally, the UvrABC repair system catalyzes the recognition and processing of DNA lesions. UvrC both incises the 5' and 3' sides of the lesion. The N-terminal half is responsible for the 3' incision and the C-terminal half is responsible for the 5' incision. In Helicobacter pylori (strain G27), this protein is UvrABC system protein C.